A 181-amino-acid polypeptide reads, in one-letter code: Ribulose bisphosphate carboxylase small subunit, chloroplastic 1 (181 aa).

The transit peptide at 1 to 57 (MASSIVSSAAAATRSNVAQASMVAPFTGLKSAASFPVTKKNNNVDITSLASNGGRVR) directs the protein to the chloroplast.

This sequence belongs to the RuBisCO small chain family. (Microbial infection) Binds to tobamovirus movement protein; this interaction seems required for viral systemic movement. In terms of assembly, heterohexadecamer of 8 large and 8 small subunits.

It localises to the plastid. The protein localises to the chloroplast. It is found in the cell junction. Its subcellular location is the plasmodesma. Functionally, ruBisCO catalyzes two reactions: the carboxylation of D-ribulose 1,5-bisphosphate, the primary event in carbon dioxide fixation, as well as the oxidative fragmentation of the pentose substrate. Both reactions occur simultaneously and in competition at the same active site. Although the small subunit is not catalytic it is essential for maximal activity. Involved in antiviral defenses. This is Ribulose bisphosphate carboxylase small subunit, chloroplastic 1 from Solanum lycopersicum (Tomato).